A 533-amino-acid chain; its full sequence is MQPNRPIRQALLSVSDKTGIVEFAQALVQRGVKLLSTGGTAKLLADHGLAVTEVSDYTGFPEMMDGRVKTLHPKVHGGILGRRGTDDEVMSQQGIEGIDMVVVNLYPFAATVAKPNCSLEEAVENIDIGGPTMVRSAAKNHQDVAIVVNNSDFNAILAEMDQHQNSLTLETRFDLAIKAFEHTAQYDAMIANYFGQLVKPYFVAEEEDAEAKCGQFPRTLNLNFIRKQTMRYGENGHQKAAFYVEQDVKEASVSTAKQLQGKALSYNNIADTDAALECVKSFDEPACVIVKHANPCGVALGADILAAYNRAYQTDPTSAFGGIIAFNRELDAKTAQTIIDRQFVEVIIAPTVAEEAKALLKAKKNVRVLECGEWSGTQQRLDVKRVNGGLLVQEADLGMVDLADLKVVSKRQPTEQELKDLLFCWKVAKFVKSNAIVYAKDNQTIGIGAGQMSRVYSAKIAGIKAQDEGLDVAGCVMASDAFFPFRDGIDAAAKVGIQCVIHPGGSMRDQEVIDAADEHNMVMVLTGMRHFRH.

Residues 1–148 (MQPNRPIRQA…KNHQDVAIVV (148 aa)) enclose the MGS-like domain.

This sequence belongs to the PurH family.

It catalyses the reaction (6R)-10-formyltetrahydrofolate + 5-amino-1-(5-phospho-beta-D-ribosyl)imidazole-4-carboxamide = 5-formamido-1-(5-phospho-D-ribosyl)imidazole-4-carboxamide + (6S)-5,6,7,8-tetrahydrofolate. The catalysed reaction is IMP + H2O = 5-formamido-1-(5-phospho-D-ribosyl)imidazole-4-carboxamide. It participates in purine metabolism; IMP biosynthesis via de novo pathway; 5-formamido-1-(5-phospho-D-ribosyl)imidazole-4-carboxamide from 5-amino-1-(5-phospho-D-ribosyl)imidazole-4-carboxamide (10-formyl THF route): step 1/1. Its pathway is purine metabolism; IMP biosynthesis via de novo pathway; IMP from 5-formamido-1-(5-phospho-D-ribosyl)imidazole-4-carboxamide: step 1/1. This is Bifunctional purine biosynthesis protein PurH from Pasteurella multocida (strain Pm70).